Here is a 271-residue protein sequence, read N- to C-terminus: MEAEGLDWLLVPLHQLVSWGAAAAMVFGGVVPYVPQYRDIRRTQNADGFSTYVCLVLLVANILRILFWFGRRFESPLLWQSAIMILTMLLMLKLCTEVRVANELNARRRSFTAADSKDEEVKVAPRRSFLDFDPHHFWQWSSFSDYVQCVLAFTGVAGYITYLSIDSALFVETLGFLAVLTEAMLGVPQLYRNHRHQSTEGMSIKMVLMWTSGDAFKTAYFLLKGAPLQFSVCGLLQVLVDLAILGQAYAFARHPQKPAPHAVHPTGTKAL.

Transmembrane regions (helical) follow at residues 8 to 28 (WLLVPLHQLVSWGAAAAMVFG), 49 to 69 (FSTYVCLVLLVANILRILFWF), and 76 to 96 (PLLWQSAIMILTMLLMLKLCT). The PQ-loop 1 domain occupies 14–80 (HQLVSWGAAA…RRFESPLLWQ (67 aa)). The residue at position 110 (S110) is a Phosphoserine. Transmembrane regions (helical) follow at residues 145 to 165 (DYVQCVLAFTGVAGYITYLSI), 168 to 188 (ALFVETLGFLAVLTEAMLGVP), and 232 to 252 (VCGLLQVLVDLAILGQAYAFA). The region spanning 178 to 233 (AVLTEAMLGVPQLYRNHRHQSTEGMSIKMVLMWTSGDAFKTAYFLLKGAPLQFSVC) is the PQ-loop 2 domain.

The protein resides in the membrane. This Homo sapiens (Human) protein is Solute carrier family 66 member 2.